A 105-amino-acid polypeptide reads, in one-letter code: uncharacterized protein (105 aa).

Residues 1–27 are disordered; that stretch reads MSLKSWHPQSKTKRVGASEGNPQWGSG.

This is an uncharacterized protein from Homo sapiens (Human).